The following is a 450-amino-acid chain: Probable ECA polymerase (450 aa).

11 consecutive transmembrane segments (helical) span residues 6-26, 37-57, 63-83, 118-138, 155-175, 181-201, 207-227, 228-248, 341-361, 378-398, and 410-430; these read FSGL…LTWF, VFFS…TSVL, VGVA…CFYA, VILM…NGFL, GVAL…VYFL, AWLF…MIVG, IIIA…ISLW, MLAA…LKRY, LVVM…GLII, YKAA…IVLA, and VFFI…YWLF.

The protein belongs to the WzyE family. In terms of assembly, probably part of a complex composed of WzxE, WzyE and WzzE.

The protein localises to the cell inner membrane. Its pathway is bacterial outer membrane biogenesis; enterobacterial common antigen biosynthesis. Functionally, probably involved in the polymerization of enterobacterial common antigen (ECA) trisaccharide repeat units. The protein is Probable ECA polymerase of Escherichia coli O127:H6 (strain E2348/69 / EPEC).